The primary structure comprises 852 residues: Vacuolar protein sorting-associated protein 16 homolog (852 aa).

This sequence belongs to the VPS16 family. Probable core component of at least two putative endosomal tethering complexes, the homotypic fusion and vacuole protein sorting (HOPS) complex and the class C core vacuole/endosome tethering (CORVET) complex. Their common core is composed of the class C Vps proteins vps-11, vps-16 and vps-18, which in HOPS further associates with vps-33.1, vps-39 and vps-41 and in CORVET with vps-8 and vps-33.2.

The protein resides in the late endosome membrane. It is found in the lysosome membrane. Its function is as follows. Plays a role in vesicle-mediated protein trafficking to lysosomal compartments including the endocytic membrane transport pathways. Believed to act as a core component of the putative HOPS and CORVET endosomal tethering complexes which are proposed to be involved in the rab-5-to-rab-7 endosome conversion probably implicating sand-1, and via binding SNAREs and SNARE complexes to mediate tethering and docking events during SNARE-mediated membrane fusion. The HOPS complex is proposed to be recruited to rab-7 on the late endosomal membrane and to regulate late endocytic, phagocytic and autophagic traffic towards lysosomes. Within the HOPS complex, contributes to the normal development of gut granules in the adult intestine. The CORVET complex is proposed to function as a rab-5 effector to mediate early endosome fusion probably in specific endosome subpopulations. Required for recruitment of vps-33.1 to the HOPS complex. Required for fusion of endosomes and autophagosomes with lysosomes; the function is dependent on its association with vps-33.1 but not vps-33.2. The polypeptide is Vacuolar protein sorting-associated protein 16 homolog (Caenorhabditis elegans).